Here is a 224-residue protein sequence, read N- to C-terminus: Phosphoribosylformylglycinamidine synthase subunit PurQ (224 aa).

The 223-residue stretch at 2-224 (KFAVIVFPGS…IVDNFVKGGV (223 aa)) folds into the Glutamine amidotransferase type-1 domain. Cys-86 serves as the catalytic Nucleophile. Residues His-194 and Glu-196 contribute to the active site.

In terms of assembly, part of the FGAM synthase complex composed of 1 PurL, 1 PurQ and 2 PurS subunits.

It localises to the cytoplasm. It carries out the reaction N(2)-formyl-N(1)-(5-phospho-beta-D-ribosyl)glycinamide + L-glutamine + ATP + H2O = 2-formamido-N(1)-(5-O-phospho-beta-D-ribosyl)acetamidine + L-glutamate + ADP + phosphate + H(+). It catalyses the reaction L-glutamine + H2O = L-glutamate + NH4(+). Its pathway is purine metabolism; IMP biosynthesis via de novo pathway; 5-amino-1-(5-phospho-D-ribosyl)imidazole from N(2)-formyl-N(1)-(5-phospho-D-ribosyl)glycinamide: step 1/2. Its function is as follows. Part of the phosphoribosylformylglycinamidine synthase complex involved in the purines biosynthetic pathway. Catalyzes the ATP-dependent conversion of formylglycinamide ribonucleotide (FGAR) and glutamine to yield formylglycinamidine ribonucleotide (FGAM) and glutamate. The FGAM synthase complex is composed of three subunits. PurQ produces an ammonia molecule by converting glutamine to glutamate. PurL transfers the ammonia molecule to FGAR to form FGAM in an ATP-dependent manner. PurS interacts with PurQ and PurL and is thought to assist in the transfer of the ammonia molecule from PurQ to PurL. This is Phosphoribosylformylglycinamidine synthase subunit PurQ from Caldanaerobacter subterraneus subsp. tengcongensis (strain DSM 15242 / JCM 11007 / NBRC 100824 / MB4) (Thermoanaerobacter tengcongensis).